A 412-amino-acid chain; its full sequence is Gamma-glutamyl phosphate reductase (412 aa).

This sequence belongs to the gamma-glutamyl phosphate reductase family.

It is found in the cytoplasm. The catalysed reaction is L-glutamate 5-semialdehyde + phosphate + NADP(+) = L-glutamyl 5-phosphate + NADPH + H(+). It participates in amino-acid biosynthesis; L-proline biosynthesis; L-glutamate 5-semialdehyde from L-glutamate: step 2/2. Its function is as follows. Catalyzes the NADPH-dependent reduction of L-glutamate 5-phosphate into L-glutamate 5-semialdehyde and phosphate. The product spontaneously undergoes cyclization to form 1-pyrroline-5-carboxylate. The sequence is that of Gamma-glutamyl phosphate reductase from Actinobacillus pleuropneumoniae serotype 7 (strain AP76).